A 124-amino-acid chain; its full sequence is CD59 glycoprotein (124 aa).

The N-terminal stretch at 1 to 24 is a signal peptide; the sequence is MTSRGVHLLLRLLFLLAVFYSSDS. A UPAR/Ly6 domain is found at 25–101; it reads SLMCYHCLLP…DLCNGPEDDG (77 aa). Cystine bridges form between Cys-28–Cys-51, Cys-31–Cys-38, Cys-44–Cys-64, Cys-70–Cys-88, and Cys-89–Cys-94. Asn-37 carries N-linked (GlcNAc...) asparagine glycosylation. Gly-101 carries GPI-anchor amidated glycine lipidation. Positions 102-124 are cleaved as a propeptide — removed in mature form; that stretch reads TALTGRTVLLVAPLLAAARNLCL.

As to quaternary structure, interacts with T-cell surface antigen CD2. In terms of processing, N- and O-glycosylated.

The protein resides in the cell membrane. Its subcellular location is the secreted. Its function is as follows. Potent inhibitor of the complement membrane attack complex (MAC) action, which protects self-cells from damage during complement activation. Acts by binding to the beta-haipins of C8 (C8A and C8B) components of the assembling MAC, forming an intermolecular beta-sheet that prevents incorporation of the multiple copies of C9 required for complete formation of the osmolytic pore. The protein is CD59 glycoprotein of Oryctolagus cuniculus (Rabbit).